Here is a 335-residue protein sequence, read N- to C-terminus: UDP-3-O-acylglucosamine N-acyltransferase (335 aa).

The active-site Proton acceptor is the histidine 225.

Belongs to the transferase hexapeptide repeat family. LpxD subfamily. In terms of assembly, homotrimer.

The enzyme catalyses a UDP-3-O-[(3R)-3-hydroxyacyl]-alpha-D-glucosamine + a (3R)-hydroxyacyl-[ACP] = a UDP-2-N,3-O-bis[(3R)-3-hydroxyacyl]-alpha-D-glucosamine + holo-[ACP] + H(+). Its pathway is bacterial outer membrane biogenesis; LPS lipid A biosynthesis. In terms of biological role, catalyzes the N-acylation of UDP-3-O-acylglucosamine using 3-hydroxyacyl-ACP as the acyl donor. Is involved in the biosynthesis of lipid A, a phosphorylated glycolipid that anchors the lipopolysaccharide to the outer membrane of the cell. This is UDP-3-O-acylglucosamine N-acyltransferase from Delftia acidovorans (strain DSM 14801 / SPH-1).